The chain runs to 103 residues: Small ribosomal subunit protein uS10 (103 aa).

This sequence belongs to the universal ribosomal protein uS10 family. In terms of assembly, part of the 30S ribosomal subunit.

Functionally, involved in the binding of tRNA to the ribosomes. This Xylella fastidiosa (strain M12) protein is Small ribosomal subunit protein uS10.